The following is a 481-amino-acid chain: Argininosuccinate lyase (481 aa).

The protein belongs to the lyase 1 family. Argininosuccinate lyase subfamily.

Its subcellular location is the cytoplasm. The catalysed reaction is 2-(N(omega)-L-arginino)succinate = fumarate + L-arginine. Its pathway is amino-acid biosynthesis; L-arginine biosynthesis; L-arginine from L-ornithine and carbamoyl phosphate: step 3/3. This Methanococcus maripaludis (strain C7 / ATCC BAA-1331) protein is Argininosuccinate lyase.